We begin with the raw amino-acid sequence, 583 residues long: Phosphoglucomutase, cytoplasmic 1 (583 aa).

The alpha-D-glucose 1,6-bisphosphate site is built by arginine 25 and serine 124. The active-site Phosphoserine intermediate is the serine 124. Positions 124, 300, 302, and 304 each coordinate Mg(2+). Serine 124 is subject to Phosphoserine. Positions 304, 305, 368, 387, 389, and 400 each coordinate alpha-D-glucose 1,6-bisphosphate.

It belongs to the phosphohexose mutase family. Monomer. It depends on Mg(2+) as a cofactor. Post-translationally, autophosphorylated. As to expression, mostly expressed in roots and coleoptiles, and, to a lower extent, in leaves, pollen and developing seeds.

The protein resides in the cytoplasm. The enzyme catalyses alpha-D-glucose 1-phosphate = alpha-D-glucose 6-phosphate. It catalyses the reaction O-phospho-L-seryl-[protein] + alpha-D-glucose 1-phosphate = alpha-D-glucose 1,6-bisphosphate + L-seryl-[protein]. The catalysed reaction is alpha-D-glucose 1,6-bisphosphate + L-seryl-[protein] = O-phospho-L-seryl-[protein] + alpha-D-glucose 6-phosphate. Catalyzes the reversible isomerization of alpha-D-glucose 1-phosphate to alpha-D-glucose 6-phosphate. The mechanism proceeds via the intermediate compound alpha-D-glucose 1,6-bisphosphate. This enzyme participates in both the breakdown and synthesis of glucose. This is Phosphoglucomutase, cytoplasmic 1 from Zea mays (Maize).